Here is a 261-residue protein sequence, read N- to C-terminus: uncharacterized protein (261 aa).

Residues methionine 1–tryptophan 236 form the ABC transporter domain. Residue glycine 36 to serine 43 coordinates ATP.

The protein belongs to the ABC transporter superfamily.

This is an uncharacterized protein from Methanocaldococcus jannaschii (strain ATCC 43067 / DSM 2661 / JAL-1 / JCM 10045 / NBRC 100440) (Methanococcus jannaschii).